We begin with the raw amino-acid sequence, 71 residues long: Protein bdm (71 aa).

The chain is Protein bdm (bdm) from Escherichia coli (strain K12).